We begin with the raw amino-acid sequence, 321 residues long: Ribosomal protein L11 methyltransferase (321 aa).

S-adenosyl-L-methionine is bound by residues threonine 150, glycine 171, aspartate 193, and asparagine 256.

This sequence belongs to the methyltransferase superfamily. PrmA family.

The protein localises to the cytoplasm. It catalyses the reaction L-lysyl-[protein] + 3 S-adenosyl-L-methionine = N(6),N(6),N(6)-trimethyl-L-lysyl-[protein] + 3 S-adenosyl-L-homocysteine + 3 H(+). Functionally, methylates ribosomal protein L11. The polypeptide is Ribosomal protein L11 methyltransferase (Herpetosiphon aurantiacus (strain ATCC 23779 / DSM 785 / 114-95)).